Reading from the N-terminus, the 308-residue chain is Elongation factor Ts (308 aa).

The involved in Mg(2+) ion dislocation from EF-Tu stretch occupies residues 80-83 (TDFV).

Belongs to the EF-Ts family.

The protein localises to the cytoplasm. Its function is as follows. Associates with the EF-Tu.GDP complex and induces the exchange of GDP to GTP. It remains bound to the aminoacyl-tRNA.EF-Tu.GTP complex up to the GTP hydrolysis stage on the ribosome. The polypeptide is Elongation factor Ts (Rhodopseudomonas palustris (strain ATCC BAA-98 / CGA009)).